The primary structure comprises 136 residues: Glutaredoxin-C7 (136 aa).

Residues 29-135 (LLRIESLASE…PLLKDAGALW (107 aa)) enclose the Glutaredoxin domain. A disulfide bond links Cys49 and Cys52. Residues 133-136 (ALWL) carry the Responsive for interaction with TGA factors motif.

This sequence belongs to the glutaredoxin family. CC-type subfamily. Interacts with TGA2, TGA3, TGA7 and PAN. Interacts with TGA9 and TGA10 in the nucleus. Highly expressed in inflorescences, roots, and siliques. Expressed at lower levels in mature flowers.

It is found in the cytoplasm. The protein localises to the nucleus. Functionally, has a glutathione-disulfide oxidoreductase activity in the presence of NADPH and glutathione reductase. Reduces low molecular weight disulfides and proteins. Involved in flower development as a regulator of petal primorida initiation and further petal morphogenesis. May mediate post-translational modifications of target proteins required for normal petal organ initiation and morphogenesis. ROXY1/TGA protein interactions can occur in vivo and support their biological relevance in petal development. May be involved in the regulation of the floral regulator class C gene AG (AGAMOUS). The protein is Glutaredoxin-C7 (GRXC7) of Arabidopsis thaliana (Mouse-ear cress).